The chain runs to 291 residues: ATP synthase subunit a (291 aa).

7 consecutive transmembrane segments (helical) span residues 50 to 70 (LDSM…FWIV), 108 to 128 (IAPL…MDLI), 129 to 149 (PVDW…GMDP), 161 to 181 (DPNI…FYSI), 203 to 223 (PVAK…TFLA), 241 to 261 (LIFI…SVPW), and 262 to 282 (AIFH…LTIV).

It belongs to the ATPase A chain family. F-type ATPases have 2 components, CF(1) - the catalytic core - and CF(0) - the membrane proton channel. CF(1) has five subunits: alpha(3), beta(3), gamma(1), delta(1), epsilon(1). CF(0) has three main subunits: a(1), b(2) and c(9-12). The alpha and beta chains form an alternating ring which encloses part of the gamma chain. CF(1) is attached to CF(0) by a central stalk formed by the gamma and epsilon chains, while a peripheral stalk is formed by the delta and b chains.

It is found in the cell inner membrane. In terms of biological role, key component of the proton channel; it plays a direct role in the translocation of protons across the membrane. In Acinetobacter baumannii (strain AB307-0294), this protein is ATP synthase subunit a.